Consider the following 99-residue polypeptide: Cell division protein FtsB (99 aa).

Residues 1-3 (MKF) are Cytoplasmic-facing. Residues 4 to 21 (FVIALIVLLGLLQYRLWS) traverse the membrane as a helical segment. Residues 22–99 (GDNSLPEYFV…GDRSVSSPSQ (78 aa)) are Periplasmic-facing. Residues 31–73 (VLQKQIAAQQEGNAKLNERNQVLKEEIIDLKSGTEAIEERARN) adopt a coiled-coil conformation.

The protein belongs to the FtsB family. In terms of assembly, part of a complex composed of FtsB, FtsL and FtsQ.

The protein resides in the cell inner membrane. In terms of biological role, essential cell division protein. May link together the upstream cell division proteins, which are predominantly cytoplasmic, with the downstream cell division proteins, which are predominantly periplasmic. The polypeptide is Cell division protein FtsB (Shewanella sp. (strain ANA-3)).